We begin with the raw amino-acid sequence, 257 residues long: MAGGTALTPTSVGSKSVPMRNHEATERGNTNNNLRALPKAVQPVSSIEGEMAKRPRGRPAGSKNKPKPPIIVTHDSPNSLRANAVEISSGCDICETLSDFARRKQRGLCILSANGCVTNVTLRQPASSGAIVTLHGRYEILSLLGSILPPPAPLGITGLTIYLAGPQGQVVGGGVVGGLIASGPVVLMAASFMNAVFDRLPMDDDEAASMQNQQYYQNGRSRPLDDIHGLPQNLLTNGNSASDIYSWGPAQRVMSKP.

The segment at 1 to 71 (MAGGTALTPT…SKNKPKPPII (71 aa)) is disordered. The a.T hook DNA-binding region spans 53–65 (KRPRGRPAGSKNK). The PPC domain maps to 77–214 (PNSLRANAVE…DEAASMQNQQ (138 aa)).

In terms of assembly, interacts with FVE/MSI4 and MSI5 which are components of HDAC corepressor complexes. In terms of tissue distribution, preferentially expressed in the inflorescence meristem and young floral buds, as well as in seedling-stage vegetative meristems. Widely expressed in flowers, roots and stems, with relatively low expression in leaves.

Its subcellular location is the nucleus. Functionally, transcription factor that specifically binds AT-rich DNA sequences related to the nuclear matrix attachment regions (MARs). Encodes a nuclear matrix protein that acts in the maintenance of genomic integrity by silencing TEs and repeat-containing genes through epigenetic machinery. Acts as a chromatin remodeling factor that modifies the architecture of FLC and FWA chromatin by modulating both H3 acetylation and methylation leading to the regulation of FLC and FWA expression. Negatively regulates floral repressors including MAF4 and MAF5. Plays a transcription activation role in anther development. Regulates the expression of arabinogalactan proteins (AGPs) involved in the formation of the nexine layer of the pollen wall. Binds AGP6, AGP11, AGP23 and AGP40 promoters. The polypeptide is AT-hook motif nuclear-localized protein 16 (Arabidopsis thaliana (Mouse-ear cress)).